Consider the following 263-residue polypeptide: MTPIKVVVHGASGKMGQEVLKTLCQENNLLPVGAVDIRAKSPALPLPDGSGSIPYSADLSSVLSQTKPDVMVDFTIAKASMPAIRIAAAHKVNLVIGTTGFSPEEISEIEQLAKTNDIGIIVAPNFALGAIIMVHLAQEASRFLASAEVIELHHDKKLDSPSGTALATAAAMLKTRGEAFNKPAKENMSDARGQEHDGIRVHSVRLPGLLAHQEVIFGAAGQSLTIRHDAFSRECYMPGVVLAIKEIVQTKGFVFGLDKLLKL.

10 to 15 (GASGKM) is an NAD(+) binding site. Residue Arg38 coordinates NADP(+). Residues 97 to 99 (GTT) and 123 to 126 (APNF) each bind NAD(+). The active-site Proton donor/acceptor is the His153. His154 is a binding site for (S)-2,3,4,5-tetrahydrodipicolinate. Catalysis depends on Lys157, which acts as the Proton donor. 163–164 (GT) is a (S)-2,3,4,5-tetrahydrodipicolinate binding site.

The protein belongs to the DapB family.

The protein localises to the cytoplasm. The catalysed reaction is (S)-2,3,4,5-tetrahydrodipicolinate + NAD(+) + H2O = (2S,4S)-4-hydroxy-2,3,4,5-tetrahydrodipicolinate + NADH + H(+). It carries out the reaction (S)-2,3,4,5-tetrahydrodipicolinate + NADP(+) + H2O = (2S,4S)-4-hydroxy-2,3,4,5-tetrahydrodipicolinate + NADPH + H(+). It functions in the pathway amino-acid biosynthesis; L-lysine biosynthesis via DAP pathway; (S)-tetrahydrodipicolinate from L-aspartate: step 4/4. In terms of biological role, catalyzes the conversion of 4-hydroxy-tetrahydrodipicolinate (HTPA) to tetrahydrodipicolinate. This chain is 4-hydroxy-tetrahydrodipicolinate reductase, found in Dehalococcoides mccartyi (strain ATCC BAA-2266 / KCTC 15142 / 195) (Dehalococcoides ethenogenes (strain 195)).